The chain runs to 405 residues: L-carnitine CoA-transferase (405 aa).

Residues lysine 97 and arginine 104 each coordinate CoA. The active-site Nucleophile is the aspartate 169.

Belongs to the CoA-transferase III family. CaiB subfamily. In terms of assembly, homodimer.

Its subcellular location is the cytoplasm. It catalyses the reaction crotonobetainyl-CoA + (R)-carnitine = crotonobetaine + (R)-carnitinyl-CoA. The catalysed reaction is 4-(trimethylamino)butanoyl-CoA + (R)-carnitine = (R)-carnitinyl-CoA + 4-(trimethylamino)butanoate. It participates in amine and polyamine metabolism; carnitine metabolism. Its function is as follows. Catalyzes the reversible transfer of the CoA moiety from gamma-butyrobetainyl-CoA to L-carnitine to generate L-carnitinyl-CoA and gamma-butyrobetaine. Is also able to catalyze the reversible transfer of the CoA moiety from gamma-butyrobetainyl-CoA or L-carnitinyl-CoA to crotonobetaine to generate crotonobetainyl-CoA. This chain is L-carnitine CoA-transferase (caiB), found in Escherichia coli O157:H7.